The sequence spans 570 residues: Low-affinity glucose transporter HXT1 (570 aa).

Residues 1–20 show a composition bias toward polar residues; that stretch reads MNSTPDLISPQKSNSSNSYE. The segment at 1–51 is disordered; sequence MNSTPDLISPQKSNSSNSYELESGRSKAMNTPEGKNESFHDNLSESQVQPA. Residues 1 to 60 lie on the Cytoplasmic side of the membrane; it reads MNSTPDLISPQKSNSSNSYELESGRSKAMNTPEGKNESFHDNLSESQVQPAVAPPNTGKG. Residues serine 23, serine 38, and serine 44 each carry the phosphoserine modification. The segment covering 34–43 has biased composition (basic and acidic residues); that stretch reads GKNESFHDNL. A helical membrane pass occupies residues 61-81; sequence VYVTVSICCVMVAFGGFIFGW. The Extracellular segment spans residues 82–116; it reads DTGTISGFVAQTDFLRRFGMKHHDGSHYLSKVRTG. A helical transmembrane segment spans residues 117 to 137; it reads LIVSIFNIGCAIGGIVLAKLG. The Cytoplasmic portion of the chain corresponds to 138–143; sequence DMYGRR. Residues 144–164 traverse the membrane as a helical segment; sequence IGLIVVVVIYTIGIIIQIASI. The Extracellular portion of the chain corresponds to 165-174; it reads NKWYQYFIGR. The chain crosses the membrane as a helical span at residues 175 to 195; sequence IISGLGVGGITVLSPMLISEV. Residues 196–201 lie on the Cytoplasmic side of the membrane; sequence APSEMR. Residues 202–222 traverse the membrane as a helical segment; sequence GTLVSCYQVMITLGIFLGYCT. Over 223–236 the chain is Extracellular; that stretch reads NFGTKNYSNSVQWR. N-linked (GlcNAc...) asparagine glycosylation occurs at asparagine 228. A helical transmembrane segment spans residues 237 to 257; the sequence is VPLGLCFAWALFMIGGMMFVP. Over 258 to 340 the chain is Cytoplasmic; sequence ESPRYLVEAG…IQSLQQLTGD (83 aa). A helical membrane pass occupies residues 341 to 357; sequence NYFFYYGTIVFQAVGLS. Topologically, residues 358-363 are extracellular; the sequence is DSFETS. Residues 364–381 form a helical membrane-spanning segment; sequence IVFGVVNFFSTCCSLYTV. Topologically, residues 382–388 are cytoplasmic; the sequence is DRFGRRN. The helical transmembrane segment at 389–409 threads the bilayer; it reads CLMWGAVGMVCCYVVYASVGV. The Extracellular portion of the chain corresponds to 410-431; it reads TRLWPNGQDQPSSKGAGNCMIV. A helical membrane pass occupies residues 432–452; sequence FACFYIFCFATTWAPIAYVVI. The Cytoplasmic segment spans residues 453–469; sequence SECFPLRVKSKCMSIAS. A helical membrane pass occupies residues 470–490; sequence AANWIWGFLISFFTPFITGAI. A topological domain (extracellular) is located at residue asparagine 491. A helical membrane pass occupies residues 492–512; sequence FYYGYVFMGCMVFAYFYVFFF. Over 513-570 the chain is Cytoplasmic; the sequence is VPETKGLSLEEVNDMYAEGVLPWKSASWVPVSKRGADYNADDLMHDDQPFYKSLFSRK.

Belongs to the major facilitator superfamily. Sugar transporter (TC 2.A.1.1) family.

It is found in the membrane. Low-affinity glucose transporter. HXT1 is as well involved in the transport of mannose. The polypeptide is Low-affinity glucose transporter HXT1 (HXT1) (Saccharomyces cerevisiae (strain ATCC 204508 / S288c) (Baker's yeast)).